A 402-amino-acid polypeptide reads, in one-letter code: Argininosuccinate synthase (402 aa).

Residues 10–18 and Ala37 contribute to the ATP site; that span reads AYSGGLDTS. 2 residues coordinate L-citrulline: Tyr88 and Ser93. Gly118 contributes to the ATP binding site. L-aspartate is bound by residues Thr120, Asn124, and Asp125. An L-citrulline-binding site is contributed by Asn124. The L-citrulline site is built by Arg128, Ser179, Ser188, Glu264, and Tyr276.

Belongs to the argininosuccinate synthase family. Type 1 subfamily. Homotetramer.

It is found in the cytoplasm. It carries out the reaction L-citrulline + L-aspartate + ATP = 2-(N(omega)-L-arginino)succinate + AMP + diphosphate + H(+). It participates in amino-acid biosynthesis; L-arginine biosynthesis; L-arginine from L-ornithine and carbamoyl phosphate: step 2/3. This Alkalilimnicola ehrlichii (strain ATCC BAA-1101 / DSM 17681 / MLHE-1) protein is Argininosuccinate synthase.